The following is a 205-amino-acid chain: Small ribosomal subunit protein uS4 (205 aa).

The interval 25-48 (KTIEARPTPPGQHGAKNTRRKKSD) is disordered. An S4 RNA-binding domain is found at 94–157 (RRLDNVVFRA…TKLPIVVETL (64 aa)).

It belongs to the universal ribosomal protein uS4 family. As to quaternary structure, part of the 30S ribosomal subunit. Contacts protein S5. The interaction surface between S4 and S5 is involved in control of translational fidelity.

In terms of biological role, one of the primary rRNA binding proteins, it binds directly to 16S rRNA where it nucleates assembly of the body of the 30S subunit. Its function is as follows. With S5 and S12 plays an important role in translational accuracy. The chain is Small ribosomal subunit protein uS4 from Methylobacillus flagellatus (strain ATCC 51484 / DSM 6875 / VKM B-1610 / KT).